The primary structure comprises 501 residues: MAPALHWLLLWVGSGMLPAQGTHLGIRLPLRSGLAGPPLGLRLPRETDEESEEPGRRGSFVEMVDNLRGKSGQGYYVEMTVGSPPQTLNILVDTGSSNFAVGAAPHPFLHRYYQRQLSSTYRDLRKGVYVPYTQGKWEGELGTDLVSIPHGPNVTVRANIAAITESDKFFINGSNWEGILGLAYAEIARPDDSLEPFFDSLVKQTHIPNIFSLQLCGAGFPLNQTEALASVGGSMIIGGIDHSLYTGSLWYTPIRREWYYEVIIVRVEINGQDLKMDCKEYNYDKSIVDSGTTNLRLPKKVFEAAVKSIKAASSTEKFPDGFWLGEQLVCWQAGTTPWNIFPVISLYLMGEVTNQSFRITILPQQYLRPVEDVATSQDDCYKFAVSQSSTGTVMGAVIMEGFYVVFDRARKRIGFAVSACHVHDEFRTAAVEGPFVTADMEDCGYNIPQTDESTLMTIAYVMAAICALFMLPLCLMVCQWRCLRCLRHQHDDFADDISLLK.

The signal sequence occupies residues 1-21; the sequence is MAPALHWLLLWVGSGMLPAQG. A propeptide spanning residues 22–45 is cleaved from the precursor; that stretch reads THLGIRLPLRSGLAGPPLGLRLPR. At 22–457 the chain is on the extracellular side; that stretch reads THLGIRLPLR…PQTDESTLMT (436 aa). The tract at residues 39-58 is disordered; the sequence is LGLRLPRETDEESEEPGRRG. A Peptidase A1 domain is found at 75–416; it reads YYVEMTVGSP…DRARKRIGFA (342 aa). Residue Asp-93 is part of the active site. N6-acetyllysine is present on Lys-126. N-linked (GlcNAc...) asparagine glycosylation is found at Asn-153, Asn-172, and Asn-223. Intrachain disulfides connect Cys-216–Cys-420, Cys-278–Cys-443, and Cys-330–Cys-380. Lys-275, Lys-279, and Lys-285 each carry N6-acetyllysine. Asp-289 is an active-site residue. 3 positions are modified to N6-acetyllysine: Lys-299, Lys-300, and Lys-307. Residue Asn-354 is glycosylated (N-linked (GlcNAc...) asparagine). A helical membrane pass occupies residues 458 to 478; the sequence is IAYVMAAICALFMLPLCLMVC. S-palmitoyl cysteine attachment occurs at residues Cys-474, Cys-478, Cys-482, and Cys-485. Over 479–501 the chain is Cytoplasmic; it reads QWRCLRCLRHQHDDFADDISLLK. Residues 479 to 501 are interaction with RTN3; that stretch reads QWRCLRCLRHQHDDFADDISLLK. Positions 496 to 500 match the DXXLL motif; the sequence is DISLL. The residue at position 498 (Ser-498) is a Phosphoserine. Residue Lys-501 forms a Glycyl lysine isopeptide (Lys-Gly) (interchain with G-Cter in ubiquitin) linkage.

It belongs to the peptidase A1 family. In terms of assembly, monomer. Interacts (via DXXLL motif) with GGA1, GGA2 and GGA3 (via their VHS domain); the interaction highly increases when BACE1 is phosphorylated at Ser-498. Interacts with RTN1; RTN2; RTN3 and RTN4; the interaction leads to inhibition of amyloid precursor protein processing. Interacts with SNX6. Interacts with PCSK9. Interacts with NAT8 and NAT8B. Interacts with BIN1. Interacts (via extracellular domain) with ADAM10 (via extracellular domain). Interacts with SORL1; this interaction may affect binding with APP and hence reduce APP cleavage. Interacts with NRDC AND NRG1. In terms of processing, N-Glycosylated. Addition of a bisecting N-acetylglucosamine by MGAT3 blocks lysosomal targeting, further degradation and is required for maintaining stability under stress conditions. Palmitoylation mediates lipid raft localization. Post-translationally, acetylated in the endoplasmic reticulum at Lys-126, Lys-275, Lys-279, Lys-285, Lys-299, Lys-300 and Lys-307. Acetylation by NAT8 and NAT8B is transient and deacetylation probably occurs in the Golgi. Acetylation regulates the maturation, the transport to the plasma membrane, the stability and the expression of the protein. In terms of processing, ubiquitinated at Lys-501, ubiquitination leads to lysosomal degradation. Monoubiquitinated and 'Lys-63'-linked polyubitinated. Deubiquitnated by USP8; inhibits lysosomal degradation. Phosphorylation at Ser-498 is required for interaction with GGA1 and retrograded transport from endosomal compartments to the trans-Golgi network. Non-phosphorylated BACE1 enters a direct recycling route to the cell surface. Expressed in the brain, specifically in neurons and astrocytes (at protein level).

The protein resides in the cell membrane. Its subcellular location is the golgi apparatus. It is found in the trans-Golgi network. The protein localises to the endoplasmic reticulum. It localises to the endosome. The protein resides in the late endosome. Its subcellular location is the early endosome. It is found in the cell surface. The protein localises to the cytoplasmic vesicle membrane. It localises to the membrane raft. The protein resides in the lysosome. Its subcellular location is the recycling endosome. It is found in the cell projection. The protein localises to the axon. It localises to the dendrite. It catalyses the reaction Broad endopeptidase specificity. Cleaves Glu-Val-Asn-Leu-|-Asp-Ala-Glu-Phe in the Swedish variant of Alzheimer's amyloid precursor protein.. With respect to regulation, inhibited by RTN3 and RTN4. In terms of biological role, responsible for the proteolytic processing of the amyloid precursor protein (APP). Cleaves at the N-terminus of the A-beta peptide sequence, between residues 671 and 672 of APP, leads to the generation and extracellular release of beta-cleaved soluble APP, and a corresponding cell-associated C-terminal fragment which is later released by gamma-secretase. Cleaves CHL1. The sequence is that of Beta-secretase 1 from Mus musculus (Mouse).